Reading from the N-terminus, the 457-residue chain is MQKYISEARLLLALAIPVILAQIAQTAMGFVDTVMAGGYSATDMAAVAIGTSIWLPAILFGHGLLLALTPVIAQLNGSGRRERIAHQVRQGFWLAGFVSVLIMLVLWNAGYIIRYMENIDPALADKAVGYLRALLWGAPGYLFFQVARNQCEGLAKTKPGMVMGFIGLLVNIPVNYIFIYGHFGMPELGGVGCGVATAAVYWVMFLAMVSYIKRARSMRDIRNEKGTAKPEPAVMKRLIQLGLPIALALFFEVTLFAVVALLVSPLGIVDVAGHQIALNFSSLMFVLPMSLAAAVTIRVGYRLGQGSTLDAQTAARTGLMVGVCMATLTAIFTVSLREQIALLYNDNPEVVTLAAHLMLLAAVYQISDSIQVIGSGILRGYKDTRSIFYITFTAYWVLGLPSGYILALTDLVVEPMGPAGFWIGFIIGLTSAAIMMMLRMRFLQRMPSAIILQRASR.

The Cytoplasmic portion of the chain corresponds to Met1–Leu10. Residues Leu11 to Val31 form a helical membrane-spanning segment. Over Asp32–Ser52 the chain is Extracellular. Residues Ile53–Ala73 form a helical membrane-spanning segment. The Cytoplasmic segment spans residues Gln74 to Phe92. Residues Trp93–Ile113 form a helical membrane-spanning segment. Over Arg114 to Lys126 the chain is Extracellular. A helical transmembrane segment spans residues Ala127–Ala147. Over Arg148–Pro159 the chain is Cytoplasmic. A helical membrane pass occupies residues Gly160 to Tyr180. The Extracellular portion of the chain corresponds to Gly181 to Leu188. The helical transmembrane segment at Gly189–Val209 threads the bilayer. The Cytoplasmic segment spans residues Ser210–Gly242. A helical membrane pass occupies residues Leu243 to Val263. Over Ser264–Gln275 the chain is Extracellular. The chain crosses the membrane as a helical span at residues Ile276–Thr296. Residues Ile297–Thr313 are Cytoplasmic-facing. Residues Ala314–Val334 traverse the membrane as a helical segment. The Extracellular portion of the chain corresponds to Ser335 to Glu349. Residues Val350–Ile370 form a helical membrane-spanning segment. At Gln371–Ser386 the chain is on the cytoplasmic side. Residues Ile387–Ala407 traverse the membrane as a helical segment. Residues Leu408–Gly417 lie on the Extracellular side of the membrane. A helical membrane pass occupies residues Pro418–Leu438. Over Arg439–Arg457 the chain is Cytoplasmic.

This sequence belongs to the multi antimicrobial extrusion (MATE) (TC 2.A.66.1) family. MdtK subfamily.

It is found in the cell inner membrane. Multidrug efflux pump that functions probably as a Na(+)/drug antiporter. This is Multidrug resistance protein MdtK (mdtK) from Shigella flexneri.